Here is a 110-residue protein sequence, read N- to C-terminus: Transcription factor S (110 aa).

Cysteine 4, cysteine 7, cysteine 22, cysteine 25, cysteine 71, cysteine 74, cysteine 99, and cysteine 102 together coordinate Zn(2+). The TFIIS-type zinc-finger motif lies at threonine 67–arginine 107.

It belongs to the archaeal rpoM/eukaryotic RPA12/RPB9/RPC11 RNA polymerase family.

The protein resides in the chromosome. Functionally, involved in transcriptional proofreading and fidelity. Induces RNA cleavage activity in RNA polymerase (RNAP). Stimulates transcription elongation by RNAP on both naked DNA and histone-bound DNA (chromatin), facilitating transcription through the histone barrier. Stimulation depends on transcript cleavage. In the presence of TFS, the cleavage activity of RNAP truncates RNA back to position +15 in a stepwise manner by releasing mainly dinucleotides from the 3'-end of the nascent RNA. The truncated RNAs are able to continue elongation. Misincorporation of nucleotides during elongation of transcription leads to arrested elongation complexes which are rescued by TFS-promoted removal of a dinucleotide from the 3'-end. TFS is able to induce a cleavage resynthesis cycle in stalled elongation complexes (resulting from the next missing nucleotide or a reduced incorporation rate of a wrong nucleotide) preventing misincorporation and enabling proofreading in a post-incorporation manner. Pausing of elongation complexes is the main determinant of TFS-induced RNA cleavage. The protein is Transcription factor S of Thermococcus kodakarensis (strain ATCC BAA-918 / JCM 12380 / KOD1) (Pyrococcus kodakaraensis (strain KOD1)).